Here is a 132-residue protein sequence, read N- to C-terminus: uncharacterized protein (132 aa).

An N-terminal signal peptide occupies residues 1–25; the sequence is MRFTKVVGFLSVLGLAAVFPLTAQA.

This is an uncharacterized protein from Bacillus subtilis (strain 168).